Reading from the N-terminus, the 316-residue chain is Ribosomal RNA small subunit methyltransferase H (316 aa).

Residues 35–37 (AGH), aspartate 55, phenylalanine 84, aspartate 105, and glutamine 112 contribute to the S-adenosyl-L-methionine site.

The protein belongs to the methyltransferase superfamily. RsmH family.

Its subcellular location is the cytoplasm. It carries out the reaction cytidine(1402) in 16S rRNA + S-adenosyl-L-methionine = N(4)-methylcytidine(1402) in 16S rRNA + S-adenosyl-L-homocysteine + H(+). Functionally, specifically methylates the N4 position of cytidine in position 1402 (C1402) of 16S rRNA. This Streptococcus sanguinis (strain SK36) protein is Ribosomal RNA small subunit methyltransferase H.